Consider the following 208-residue polypeptide: Ribonuclease HII (208 aa).

The RNase H type-2 domain occupies 1-205 (MIVVGIDEAG…LQEIAPNYYI (205 aa)). D7, E8, and D104 together coordinate a divalent metal cation.

The protein belongs to the RNase HII family. Requires Mn(2+) as cofactor. The cofactor is Mg(2+).

The protein localises to the cytoplasm. The catalysed reaction is Endonucleolytic cleavage to 5'-phosphomonoester.. In terms of biological role, endonuclease that specifically degrades the RNA of RNA-DNA hybrids. This Sulfurisphaera tokodaii (strain DSM 16993 / JCM 10545 / NBRC 100140 / 7) (Sulfolobus tokodaii) protein is Ribonuclease HII.